Here is a 769-residue protein sequence, read N- to C-terminus: Neutral alpha-glucosidase C (769 aa).

The active-site Nucleophile is the Asp-366. The active site involves Glu-369. Catalysis depends on Asp-442, which acts as the Proton donor.

It belongs to the glycosyl hydrolase 31 family.

It catalyses the reaction Hydrolysis of terminal, non-reducing (1-&gt;4)-linked alpha-D-glucose residues with release of alpha-D-glucose.. Has alpha-glucosidase activity. This chain is Neutral alpha-glucosidase C (GANC), found in Macaca fascicularis (Crab-eating macaque).